Here is a 227-residue protein sequence, read N- to C-terminus: MEALKKIAGVTAAQYVTDGMTIGLGTGSTAYYFVEEIGRRVKQEGLQVVGVTTSSVTSKQAEVLGIPLKSIDDIDSIDLTVDGADEVDKDFNGIKGGGAALLMEKIVATPTKEYIWVVDASKMVEHLGAFKLPVEVVQYGADRLFRVFEKAGYKPSFRMKGDSRLVTDMQNYIIDLDLGCIKDPVAFGHLLDGTVGVVEHGLFNGMVDKVIVASKDGVTVLEVPKAS.

Substrate is bound by residues 26 to 29 (TGST), 82 to 85 (DGAD), and 95 to 98 (KGGG). Glu104 functions as the Proton acceptor in the catalytic mechanism. Position 122 (Lys122) interacts with substrate.

This sequence belongs to the ribose 5-phosphate isomerase family. As to quaternary structure, homodimer.

It carries out the reaction aldehydo-D-ribose 5-phosphate = D-ribulose 5-phosphate. It functions in the pathway carbohydrate degradation; pentose phosphate pathway; D-ribose 5-phosphate from D-ribulose 5-phosphate (non-oxidative stage): step 1/1. Catalyzes the reversible conversion of ribose-5-phosphate to ribulose 5-phosphate. In Streptococcus pyogenes serotype M28 (strain MGAS6180), this protein is Ribose-5-phosphate isomerase A.